The following is a 338-amino-acid chain: Ketol-acid reductoisomerase (NADP(+)) (338 aa).

One can recognise a KARI N-terminal Rossmann domain in the interval 1–181; the sequence is MKVYYDKDAD…GGTKGGVIET (181 aa). NADP(+) contacts are provided by residues 24-27, R47, and S52; that span reads YGSQ. H107 is a catalytic residue. An NADP(+)-binding site is contributed by G133. In terms of domain architecture, KARI C-terminal knotted spans 182 to 327; the sequence is NFREETETDL…GQLRDMMPWI (146 aa). Positions 190, 194, 226, and 230 each coordinate Mg(2+). Residue S251 participates in substrate binding.

It belongs to the ketol-acid reductoisomerase family. Mg(2+) is required as a cofactor.

It carries out the reaction (2R)-2,3-dihydroxy-3-methylbutanoate + NADP(+) = (2S)-2-acetolactate + NADPH + H(+). The catalysed reaction is (2R,3R)-2,3-dihydroxy-3-methylpentanoate + NADP(+) = (S)-2-ethyl-2-hydroxy-3-oxobutanoate + NADPH + H(+). Its pathway is amino-acid biosynthesis; L-isoleucine biosynthesis; L-isoleucine from 2-oxobutanoate: step 2/4. It participates in amino-acid biosynthesis; L-valine biosynthesis; L-valine from pyruvate: step 2/4. Functionally, involved in the biosynthesis of branched-chain amino acids (BCAA). Catalyzes an alkyl-migration followed by a ketol-acid reduction of (S)-2-acetolactate (S2AL) to yield (R)-2,3-dihydroxy-isovalerate. In the isomerase reaction, S2AL is rearranged via a Mg-dependent methyl migration to produce 3-hydroxy-3-methyl-2-ketobutyrate (HMKB). In the reductase reaction, this 2-ketoacid undergoes a metal-dependent reduction by NADPH to yield (R)-2,3-dihydroxy-isovalerate. The protein is Ketol-acid reductoisomerase (NADP(+)) of Dechloromonas aromatica (strain RCB).